A 111-amino-acid polypeptide reads, in one-letter code: Photosystem II reaction center Psb28 protein (111 aa).

This sequence belongs to the Psb28 family. As to quaternary structure, part of the photosystem II complex.

The protein resides in the cellular thylakoid membrane. This is Photosystem II reaction center Psb28 protein from Gloeothece citriformis (strain PCC 7424) (Cyanothece sp. (strain PCC 7424)).